A 92-amino-acid polypeptide reads, in one-letter code: MHRSLAGSAVLMLLLLFALGNFVGVQPGLVTRDADNGQLMDNRRNLRLERKTMSLFKSLDKRADCSTYCFGMGICQSGCYCGPGHACMPNGR.

An N-terminal signal peptide occupies residues Met-1 to Gly-20. Positions Asn-21–Arg-62 are excised as a propeptide. 3 disulfides stabilise this stretch: Cys-65–Cys-79, Cys-69–Cys-81, and Cys-75–Cys-87. Asn-90 is modified (asparagine amide).

It belongs to the conotoxin P superfamily. As to expression, expressed by the venom duct.

Its subcellular location is the secreted. In terms of biological role, probable neurotoxin that inhibits ion channels. The sequence is that of Conotoxin Im9.4 from Conus imperialis (Imperial cone).